We begin with the raw amino-acid sequence, 246 residues long: Chlorophyll a-b binding protein 6A, chloroplastic (246 aa).

The N-terminal 45 residues, 1 to 45 (MASNTLMSCGIPAVCPSFLSSTKSKFAAAMPVYVGATNFMSRFSM), are a transit peptide targeting the chloroplast. W49 provides a ligand contact to chlorophyll b. Chlorophyll a contacts are provided by F69, E88, and H91. R93 is a binding site for chlorophyll b. A helical membrane pass occupies residues 94 to 114 (WAMLAVPGIIVPEALGLGNWV). L130 lines the chlorophyll a pocket. A helical transmembrane segment spans residues 133 to 153 (PVPWGTLPTILAIEFLAIAFV). Residues V134, E154, and R157 each contribute to the chlorophyll b site. Residues K191, E192, N195, R197, Q209, and H225 each contribute to the chlorophyll a site.

It belongs to the light-harvesting chlorophyll a/b-binding (LHC) protein family. The LHC complex consists of chlorophyll a-b binding proteins. Binds at least 14 chlorophylls (8 Chl-a and 6 Chl-b) and carotenoids such as lutein and neoxanthin. is required as a cofactor. In terms of processing, photoregulated by reversible phosphorylation of its threonine residues.

The protein resides in the plastid. Its subcellular location is the chloroplast thylakoid membrane. Its function is as follows. The light-harvesting complex (LHC) functions as a light receptor, it captures and delivers excitation energy to photosystems with which it is closely associated. This chain is Chlorophyll a-b binding protein 6A, chloroplastic (CAB6A), found in Solanum lycopersicum (Tomato).